The primary structure comprises 525 residues: GMP synthase [glutamine-hydrolyzing] (525 aa).

One can recognise a Glutamine amidotransferase type-1 domain in the interval 9 to 207 (RILILDFGSQ…VRDICECEAL (199 aa)). Cysteine 86 functions as the Nucleophile in the catalytic mechanism. Active-site residues include histidine 181 and glutamate 183. Residues 208-400 (WTPAKIIDDA…LGLPYDMLYR (193 aa)) form the GMPS ATP-PPase domain. 235 to 241 (SGGVDSS) lines the ATP pocket.

As to quaternary structure, homodimer.

It carries out the reaction XMP + L-glutamine + ATP + H2O = GMP + L-glutamate + AMP + diphosphate + 2 H(+). Its pathway is purine metabolism; GMP biosynthesis; GMP from XMP (L-Gln route): step 1/1. Catalyzes the synthesis of GMP from XMP. The polypeptide is GMP synthase [glutamine-hydrolyzing] (Cronobacter sakazakii (strain ATCC BAA-894) (Enterobacter sakazakii)).